The sequence spans 429 residues: C4-dicarboxylate transport protein (429 aa).

8 helical membrane passes run valine 9 to proline 29, leucine 45 to methionine 65, leucine 79 to isoleucine 99, glycine 149 to glycine 169, valine 185 to methionine 205, leucine 223 to alanine 243, isoleucine 308 to methionine 328, and alanine 356 to isoleucine 376.

It belongs to the dicarboxylate/amino acid:cation symporter (DAACS) (TC 2.A.23) family.

The protein resides in the cell inner membrane. Its function is as follows. Responsible for the transport of dicarboxylates such as succinate, fumarate, and malate from the periplasm across the membrane. The chain is C4-dicarboxylate transport protein from Burkholderia ambifaria (strain MC40-6).